The following is a 444-amino-acid chain: Tubulin beta chain (444 aa).

GTP-binding residues include glutamine 11, glutamate 68, serine 137, glycine 141, threonine 142, glycine 143, asparagine 203, and asparagine 225. Position 68 (glutamate 68) interacts with Mg(2+). The tract at residues glutamine 424–methionine 444 is disordered. Over residues threonine 427–methionine 444 the composition is skewed to acidic residues.

This sequence belongs to the tubulin family. As to quaternary structure, dimer of alpha and beta chains. A typical microtubule is a hollow water-filled tube with an outer diameter of 25 nm and an inner diameter of 15 nM. Alpha-beta heterodimers associate head-to-tail to form protofilaments running lengthwise along the microtubule wall with the beta-tubulin subunit facing the microtubule plus end conferring a structural polarity. Microtubules usually have 13 protofilaments but different protofilament numbers can be found in some organisms and specialized cells. Mg(2+) serves as cofactor.

It is found in the cytoplasm. The protein localises to the cytoskeleton. Functionally, tubulin is the major constituent of microtubules, a cylinder consisting of laterally associated linear protofilaments composed of alpha- and beta-tubulin heterodimers. Microtubules grow by the addition of GTP-tubulin dimers to the microtubule end, where a stabilizing cap forms. Below the cap, tubulin dimers are in GDP-bound state, owing to GTPase activity of alpha-tubulin. The protein is Tubulin beta chain of Achlya klebsiana.